The sequence spans 164 residues: Interferon gamma (164 aa).

Residues 1–19 (MTCQTYCLFVLSVIMIYFG) form the signal peptide. Asn42, Asn61, and Asn95 each carry an N-linked (GlcNAc...) asparagine glycan.

Belongs to the type II (or gamma) interferon family. As to quaternary structure, homodimer.

It is found in the secreted. Its function is as follows. Produced by lymphocytes activated by specific antigens or mitogens. IFN-gamma, in addition to having antiviral activity, has important immunoregulatory functions. It is a potent activator of macrophages, it has antiproliferative effects on transformed cells and it can potentiate the antiviral and antitumor effects of the type I interferons. This chain is Interferon gamma (IFNG), found in Anas platyrhynchos (Mallard).